A 125-amino-acid chain; its full sequence is S-adenosylmethionine decarboxylase proenzyme (125 aa).

Ser63 functions as the Schiff-base intermediate with substrate; via pyruvic acid in the catalytic mechanism. Residue Ser63 is modified to Pyruvic acid (Ser); by autocatalysis. The active-site Proton acceptor; for processing activity is the His68. Residue Cys83 is the Proton donor; for catalytic activity of the active site.

Belongs to the prokaryotic AdoMetDC family. Type 1 subfamily. Heterotetramer of two alpha and two beta chains arranged as a dimer of alpha/beta heterodimers. The cofactor is pyruvate. In terms of processing, is synthesized initially as an inactive proenzyme. Formation of the active enzyme involves a self-maturation process in which the active site pyruvoyl group is generated from an internal serine residue via an autocatalytic post-translational modification. Two non-identical subunits are generated from the proenzyme in this reaction, and the pyruvate is formed at the N-terminus of the alpha chain, which is derived from the carboxyl end of the proenzyme. The post-translation cleavage follows an unusual pathway, termed non-hydrolytic serinolysis, in which the side chain hydroxyl group of the serine supplies its oxygen atom to form the C-terminus of the beta chain, while the remainder of the serine residue undergoes an oxidative deamination to produce ammonia and the pyruvoyl group blocking the N-terminus of the alpha chain.

It carries out the reaction S-adenosyl-L-methionine + H(+) = S-adenosyl 3-(methylsulfanyl)propylamine + CO2. It participates in amine and polyamine biosynthesis; S-adenosylmethioninamine biosynthesis; S-adenosylmethioninamine from S-adenosyl-L-methionine: step 1/1. Functionally, catalyzes the decarboxylation of S-adenosylmethionine to S-adenosylmethioninamine (dcAdoMet), the propylamine donor required for the synthesis of the polyamines spermine and spermidine from the diamine putrescine. This Moorella thermoacetica (strain ATCC 39073 / JCM 9320) protein is S-adenosylmethionine decarboxylase proenzyme.